A 152-amino-acid chain; its full sequence is UPF0225 protein YchJ (152 aa).

The protein belongs to the UPF0225 family.

The protein is UPF0225 protein YchJ of Escherichia coli O127:H6 (strain E2348/69 / EPEC).